Consider the following 739-residue polypeptide: Catalase-peroxidase 1 (739 aa).

Positions methionine 1–lysine 33 are disordered. The segment at residues tryptophan 113–tyrosine 236 is a cross-link (tryptophyl-tyrosyl-methioninium (Trp-Tyr) (with M-262)). The Proton acceptor role is filled by histidine 114. Residues tyrosine 236–methionine 262 constitute a cross-link (tryptophyl-tyrosyl-methioninium (Tyr-Met) (with W-113)). Histidine 277 serves as a coordination point for heme b.

This sequence belongs to the peroxidase family. Peroxidase/catalase subfamily. In terms of assembly, homodimer or homotetramer. The cofactor is heme b. Post-translationally, formation of the three residue Trp-Tyr-Met cross-link is important for the catalase, but not the peroxidase activity of the enzyme.

It carries out the reaction H2O2 + AH2 = A + 2 H2O. The catalysed reaction is 2 H2O2 = O2 + 2 H2O. Functionally, bifunctional enzyme with both catalase and broad-spectrum peroxidase activity. May play a role in the intracellular survival of mycobacteria. This is Catalase-peroxidase 1 from Mycolicibacterium smegmatis (strain ATCC 700084 / mc(2)155) (Mycobacterium smegmatis).